Consider the following 365-residue polypeptide: Fucose-specific lectin (365 aa).

The first 21 residues, 1–21, serve as a signal peptide directing secretion; that stretch reads MKLLHFTILLQVSLFPASSLA. 6 consecutive repeat copies span residues 22-79, 80-141, 142-206, 207-261, 262-309, and 310-365. Positions 22–365 are 6 X approximate tandem repeats; that stretch reads QAGGNNTEVQ…RRGILAIPPA (344 aa). N26 is a glycosylation site (N-linked (GlcNAc...) asparagine). Beta-L-fucose-binding residues include R51, E63, and W70. 2 N-linked (GlcNAc...) asparagine glycosylation sites follow: N76 and N85. Residue R111 coordinates beta-L-fucose. N118 is a glycosylation site (N-linked (GlcNAc...) asparagine). Residues E123, W132, R164, E176, W201, and R231 each contribute to the beta-L-fucose site. N248 carries N-linked (GlcNAc...) asparagine glycosylation. The beta-L-fucose site is built by R283, R333, and E347.

Belongs to the fungal fucose-specific lectin family. In terms of assembly, homodimer.

The protein resides in the secreted. Probable L-fucose-binding lectin. The polypeptide is Fucose-specific lectin (Arthroderma benhamiae (strain ATCC MYA-4681 / CBS 112371) (Trichophyton mentagrophytes)).